We begin with the raw amino-acid sequence, 315 residues long: WD repeat domain-containing protein 83 (315 aa).

WD repeat units follow at residues 23 to 62 (CSQGAVRAVRFNVDGNYCLTCGSDKTLKLWNPLRGTLLRT), 65 to 104 (GHGYEVLDAAGSFDNSHLCSGGGDKTVVLWDVATGQVVRK), 107 to 146 (GHAGKVNTVQFNEEATVILSGSIDSSVRCWDCRSRKPEPV), 151 to 188 (EARDGISSVKVSDHEILAGSVDGRVRRYDLRMGQVSSD), 190 to 228 (VGSPITCTCFSRDGQCTLISSLDSTLRLLDKDTGELLGE), 231 to 272 (GHKN…LALA), and 275 to 313 (VGSNVVQSLAYHPTEPCLLTAMGGSIQYWREETYEAEGG).

It belongs to the WD repeat MORG1 family. As to quaternary structure, interacts with EGLN3/PHD3. Interacts with ERK signaling proteins MAP2K1/MEK1, MAP2K2/MEK2, LAMTOR3, ARAF/Raf-1, MAPK1/ERK2 and MAPK3/ERK1. Identified in the spliceosome C complex. Interacts with PARD6B and CRB3. Interacts strongly with GTP-bound RRAGA but not with inactive GDP-bound. Interacts with p62/SQSTM1. In terms of tissue distribution, ubiquitous.

It localises to the cytoplasm. The protein resides in the lysosome. The protein localises to the nucleus. In terms of biological role, molecular scaffold protein for various multimeric protein complexes. Acts as a module in the assembly of a multicomponent scaffold for the ERK pathway, linking ERK responses to specific agonists. At low concentrations it enhances ERK activation, whereas high concentrations lead to the inhibition of ERK activation. Also involved in response to hypoxia by acting as a negative regulator of HIF1A/HIF-1-alpha via its interaction with EGLN3/PHD3. May promote degradation of HIF1A. May act by recruiting signaling complexes to a specific upstream activator. May also be involved in pre-mRNA splicing. Participates in tight junction development by regulating apico-basal polarity, a key step in tissue development and organization. Mechanistically, regulates the translocation of PAR6-aPKC from the cytoplasm to the apical surface by acting as an adapter between PARD6B AND CRB3. Also acts as a negative regulator of mTORC1 under nutrient-rich conditions by binding to the active Rag GTPases to inhibit mTORC1 localization to the lysosome and phosphorylation of downstream targets. This facilitates constitutive basal autophagy during nutrient availability. The polypeptide is WD repeat domain-containing protein 83 (Wdr83) (Mus musculus (Mouse)).